We begin with the raw amino-acid sequence, 195 residues long: Nicotinamide riboside kinase 1 (195 aa).

Residue 10–18 (GVTNGGKTT) coordinates ATP. 2 residues coordinate Mg(2+): threonine 17 and aspartate 36. Aspartate 36 acts as the Proton acceptor in catalysis. Residues 36–39 (DDFF) and 55–56 (YD) each bind substrate. Arginine 128 contacts ATP. Substrate contacts are provided by residues arginine 129 and 134-135 (YE). ATP is bound by residues 132–134 (RVY) and 172–174 (RSE).

The protein belongs to the uridine kinase family. NRK subfamily. As to quaternary structure, monomer.

It carries out the reaction beta-nicotinamide D-riboside + ATP = beta-nicotinamide D-ribonucleotide + ADP + H(+). The catalysed reaction is beta-D-ribosylnicotinate + ATP = nicotinate beta-D-ribonucleotide + ADP + H(+). It functions in the pathway cofactor biosynthesis; NAD(+) biosynthesis. Functionally, catalyzes the phosphorylation of nicotinamide riboside (NR) and nicotinic acid riboside (NaR) to form nicotinamide mononucleotide (NMN) and nicotinic acid mononucleotide (NaMN). The sequence is that of Nicotinamide riboside kinase 1 (Nmrk1) from Rattus norvegicus (Rat).